We begin with the raw amino-acid sequence, 247 residues long: Carboxy-S-adenosyl-L-methionine synthase (247 aa).

S-adenosyl-L-methionine contacts are provided by residues Y39, 64 to 66, 89 to 90, 117 to 118, N132, and R199; these read GCS, DN, and DI.

This sequence belongs to the class I-like SAM-binding methyltransferase superfamily. Cx-SAM synthase family. Homodimer.

It catalyses the reaction prephenate + S-adenosyl-L-methionine = carboxy-S-adenosyl-L-methionine + 3-phenylpyruvate + H2O. Functionally, catalyzes the conversion of S-adenosyl-L-methionine (SAM) to carboxy-S-adenosyl-L-methionine (Cx-SAM). The chain is Carboxy-S-adenosyl-L-methionine synthase from Escherichia coli O7:K1 (strain IAI39 / ExPEC).